Consider the following 267-residue polypeptide: Glutamate racemase (267 aa).

Residues 13–14 and 45–46 each bind substrate; these read DS and YG. The Proton donor/acceptor role is filled by cysteine 77. 78-79 provides a ligand contact to substrate; the sequence is NT. Cysteine 192 functions as the Proton donor/acceptor in the catalytic mechanism. A substrate-binding site is contributed by 193-194; it reads TH.

Belongs to the aspartate/glutamate racemases family.

The enzyme catalyses L-glutamate = D-glutamate. It functions in the pathway cell wall biogenesis; peptidoglycan biosynthesis. Its function is as follows. Provides the (R)-glutamate required for cell wall biosynthesis. The polypeptide is Glutamate racemase (Sinorhizobium fredii (strain NBRC 101917 / NGR234)).